An 875-amino-acid polypeptide reads, in one-letter code: Leucine--tRNA ligase (875 aa).

The 'HIGH' region motif lies at 43–53; the sequence is PYPSGRIHIGH. The short motif at 631–635 is the 'KMSKS' region element; the sequence is KMSKS. An ATP-binding site is contributed by Lys634.

It belongs to the class-I aminoacyl-tRNA synthetase family.

It localises to the cytoplasm. The enzyme catalyses tRNA(Leu) + L-leucine + ATP = L-leucyl-tRNA(Leu) + AMP + diphosphate. The protein is Leucine--tRNA ligase of Mesorhizobium japonicum (strain LMG 29417 / CECT 9101 / MAFF 303099) (Mesorhizobium loti (strain MAFF 303099)).